A 20-amino-acid polypeptide reads, in one-letter code: Toxin TpF21-Cocle (20 aa).

The region spanning Lys1–Lys20 is the LCN-type CS-alpha/beta domain.

Belongs to the long (4 C-C) scorpion toxin superfamily. Sodium channel inhibitor family. Beta subfamily. In terms of tissue distribution, expressed by the venom gland.

It localises to the secreted. Its function is as follows. Beta toxins bind voltage-independently at site-4 of sodium channels (Nav) and shift the voltage of activation toward more negative potentials thereby affecting sodium channel activation and promoting spontaneous and repetitive firing. The polypeptide is Toxin TpF21-Cocle (Tityus pachyurus (Colombian scorpion)).